A 543-amino-acid chain; its full sequence is Putative pectinesterase/pectinesterase inhibitor 22 (543 aa).

A signal peptide spans 1-19; sequence MGITTALLLVMLMSVHTSS. The tract at residues 38 to 197 is pectinesterase inhibitor 22; that stretch reads AKACQFIDAH…TQLVSNVLDM (160 aa). N-linked (GlcNAc...) asparagine glycosylation is found at Asn-211 and Asn-263. The segment at 240–527 is pectinesterase 22; sequence NTVVAIDGKG…FTVGSFIDGR (288 aa). Substrate contacts are provided by Thr-315 and Gln-345. The Proton donor; for pectinesterase activity role is filled by Asp-368. An intrachain disulfide couples Cys-382 to Cys-402. Asp-389 acts as the Nucleophile; for pectinesterase activity in catalysis. The substrate site is built by Arg-448 and Trp-450.

In the N-terminal section; belongs to the PMEI family. It in the C-terminal section; belongs to the pectinesterase family.

It localises to the secreted. It is found in the cell wall. It catalyses the reaction [(1-&gt;4)-alpha-D-galacturonosyl methyl ester](n) + n H2O = [(1-&gt;4)-alpha-D-galacturonosyl](n) + n methanol + n H(+). It participates in glycan metabolism; pectin degradation; 2-dehydro-3-deoxy-D-gluconate from pectin: step 1/5. Its function is as follows. Acts in the modification of cell walls via demethylesterification of cell wall pectin. The chain is Putative pectinesterase/pectinesterase inhibitor 22 (PME22) from Arabidopsis thaliana (Mouse-ear cress).